Here is a 520-residue protein sequence, read N- to C-terminus: Amine oxidase [flavin-containing] B (520 aa).

N-acetylserine is present on serine 2. The Cytoplasmic portion of the chain corresponds to 2-489 (SNKSDVIVVG…TFLERHLPSV (488 aa)). Lysine 52 and lysine 248 each carry N6-acetyllysine. At cysteine 397 the chain carries S-8alpha-FAD cysteine. A helical; Anchor for type IV membrane protein membrane pass occupies residues 490–516 (PGLLKLFGLTTILSATALGFLAHKRGL). Residues 517-520 (FVHF) are Mitochondrial intermembrane-facing.

Belongs to the flavin monoamine oxidase family. In terms of assembly, monomer, homo- or heterodimer (containing two subunits of similar size). Each subunit contains a covalently bound flavin. Enzymatically active as monomer. The cofactor is FAD.

The protein localises to the mitochondrion outer membrane. It carries out the reaction a secondary aliphatic amine + O2 + H2O = a primary amine + an aldehyde + H2O2. The catalysed reaction is (R)-adrenaline + O2 + H2O = (R)-3,4-dihydroxymandelaldehyde + methylamine + H2O2. The enzyme catalyses a primary methyl amine + O2 + H2O = an aldehyde + H2O2 + NH4(+). It catalyses the reaction benzylamine + O2 + H2O = benzaldehyde + H2O2 + NH4(+). It carries out the reaction dopamine + O2 + H2O = 3,4-dihydroxyphenylacetaldehyde + H2O2 + NH4(+). The catalysed reaction is tyramine + O2 + H2O = (4-hydroxyphenyl)acetaldehyde + H2O2 + NH4(+). The enzyme catalyses (R)-noradrenaline + O2 + H2O = (R)-3,4-dihydroxymandelaldehyde + H2O2 + NH4(+). It catalyses the reaction 2-phenylethylamine + O2 + H2O = 2-phenylacetaldehyde + H2O2 + NH4(+). It carries out the reaction N-acetylputrescine + O2 + H2O = 4-acetamidobutanal + H2O2 + NH4(+). Functionally, catalyzes the oxidative deamination of primary and some secondary amines such as neurotransmitters, and exogenous amines including the tertiary amine, neurotoxin 1-methyl-4-phenyl-1,2,3,6-tetrahydropyridine (MPTP), with concomitant reduction of oxygen to hydrogen peroxide and participates in the metabolism of neuroactive and vasoactive amines in the central nervous system and peripheral tissues. Preferentially degrades benzylamine and phenylethylamine. In Mus musculus (Mouse), this protein is Amine oxidase [flavin-containing] B.